Here is a 361-residue protein sequence, read N- to C-terminus: 3-dehydroquinate synthase (361 aa).

Residues Ser-72–Lys-77, Thr-130–Thr-131, Lys-142, and Lys-151 each bind NAD(+). Residues Glu-184, His-247, and His-264 each coordinate Zn(2+).

Belongs to the sugar phosphate cyclases superfamily. Dehydroquinate synthase family. NAD(+) is required as a cofactor. It depends on Co(2+) as a cofactor. Zn(2+) serves as cofactor.

It is found in the cytoplasm. It carries out the reaction 7-phospho-2-dehydro-3-deoxy-D-arabino-heptonate = 3-dehydroquinate + phosphate. It functions in the pathway metabolic intermediate biosynthesis; chorismate biosynthesis; chorismate from D-erythrose 4-phosphate and phosphoenolpyruvate: step 2/7. In terms of biological role, catalyzes the conversion of 3-deoxy-D-arabino-heptulosonate 7-phosphate (DAHP) to dehydroquinate (DHQ). In Bacillus cereus (strain ATCC 14579 / DSM 31 / CCUG 7414 / JCM 2152 / NBRC 15305 / NCIMB 9373 / NCTC 2599 / NRRL B-3711), this protein is 3-dehydroquinate synthase.